Reading from the N-terminus, the 64-residue chain is Cytochrome c oxidase subunit 2 (64 aa).

The Mitochondrial intermembrane portion of the chain corresponds to 1–14 (MAHPSQLGFQDAAS). The helical transmembrane segment at 15 to 45 (PMMEELLHFHDHALMVVFLISTFVLYIILTM) threads the bilayer. The Mitochondrial matrix portion of the chain corresponds to 46-64 (LTTKLTDKLILESHEIEII).

Belongs to the cytochrome c oxidase subunit 2 family. As to quaternary structure, component of the cytochrome c oxidase (complex IV, CIV), a multisubunit enzyme composed of 14 subunits. The complex is composed of a catalytic core of 3 subunits MT-CO1, MT-CO2 and MT-CO3, encoded in the mitochondrial DNA, and 11 supernumerary subunits COX4I, COX5A, COX5B, COX6A, COX6B, COX6C, COX7A, COX7B, COX7C, COX8 and NDUFA4, which are encoded in the nuclear genome. The complex exists as a monomer or a dimer and forms supercomplexes (SCs) in the inner mitochondrial membrane with NADH-ubiquinone oxidoreductase (complex I, CI) and ubiquinol-cytochrome c oxidoreductase (cytochrome b-c1 complex, complex III, CIII), resulting in different assemblies (supercomplex SCI(1)III(2)IV(1) and megacomplex MCI(2)III(2)IV(2)). Found in a complex with TMEM177, COA6, COX18, COX20, SCO1 and SCO2. Interacts with TMEM177 in a COX20-dependent manner. Interacts with COX20. Interacts with COX16. It depends on Cu cation as a cofactor.

The protein localises to the mitochondrion inner membrane. It carries out the reaction 4 Fe(II)-[cytochrome c] + O2 + 8 H(+)(in) = 4 Fe(III)-[cytochrome c] + 2 H2O + 4 H(+)(out). Functionally, component of the cytochrome c oxidase, the last enzyme in the mitochondrial electron transport chain which drives oxidative phosphorylation. The respiratory chain contains 3 multisubunit complexes succinate dehydrogenase (complex II, CII), ubiquinol-cytochrome c oxidoreductase (cytochrome b-c1 complex, complex III, CIII) and cytochrome c oxidase (complex IV, CIV), that cooperate to transfer electrons derived from NADH and succinate to molecular oxygen, creating an electrochemical gradient over the inner membrane that drives transmembrane transport and the ATP synthase. Cytochrome c oxidase is the component of the respiratory chain that catalyzes the reduction of oxygen to water. Electrons originating from reduced cytochrome c in the intermembrane space (IMS) are transferred via the dinuclear copper A center (CU(A)) of subunit 2 and heme A of subunit 1 to the active site in subunit 1, a binuclear center (BNC) formed by heme A3 and copper B (CU(B)). The BNC reduces molecular oxygen to 2 water molecules using 4 electrons from cytochrome c in the IMS and 4 protons from the mitochondrial matrix. The polypeptide is Cytochrome c oxidase subunit 2 (mt-co2) (Geophagus steindachneri (Red hump earth eater)).